A 761-amino-acid chain; its full sequence is MENSFLSSKLVFLLAIALVLFLNTELSFLTAEGASDSNSKVYIVYLGQREHDDPELLTASHHQMLESLLQSKEDAHNSMIYSYQHGFSGFAALLTSSQAKKISEHPEVIHVIPNRILKLKTTRIWDHLGLSPIPTSFSSSSSAKAKGLLHNTSMGSEAIIGVVDSGIWPESKVFNDQGLGPIPKRWRGKCRSGEKFNATMHCNKKLIGAKYYQSGLLAMNGGKFNRIIIRDFKSNRDATGHGTHTATIAGGSFVPNASFYGLARGTVRGGAPRARIASYKACWNVVGWGGICSSADMWKAYDDAIHDQVDVLSVSIGASIPEDSERVDFIAAFHAVAKGITVVAAAGNDGSGAQTICNVAPWLLTVAATTLDRSFPTKITLGNNQTFFVSNLAESLFTGPEISTGLAFLDDDVDVKGKTILEFDSTHPSSIAGRGVVAVILAKKPDDRPAPDNSYIFTDYEIGTHILQYIRTTRSPTVRISAATTLTGQPATPKVAAFSSRGPNSVSPAILKPDIAAPGVSILAAVSPLDPGAFNGFKLHSGTSMSTPVVSGIIVLLKSLHPKWSPAAMRSALVTTAWRTSPSGEPIFAQGSNKKLADPFDYGGGLVNPEKAAKPGLVYDMGIKDYINYMCSAGYNDSSISRVLGKKTKCPIPKPSMLDINLPSITIPNLEKEVTLTRTVTNVGPIKSVYRAVIESPLGITLTVNPTILVFKSAAKRVLTFSVKAKTSHKVNSGYFFGSLTWTDGVHDVTIPVSVKTTISM.

An N-terminal signal peptide occupies residues 1–21; sequence MENSFLSSKLVFLLAIALVLF. Residues 22-120 constitute a propeptide, activation peptide; that stretch reads LNTELSFLTA…VIPNRILKLK (99 aa). The region spanning 41–119 is the Inhibitor I9 domain; that stretch reads VYIVYLGQRE…HVIPNRILKL (79 aa). One can recognise a Peptidase S8 domain in the interval 134–613; sequence PTSFSSSSSA…GGLVNPEKAA (480 aa). Residue Asn151 is glycosylated (N-linked (GlcNAc...) asparagine). Asp164 serves as the catalytic Charge relay system. An N-linked (GlcNAc...) asparagine glycan is attached at Asn197. The active-site Charge relay system is His241. Asn256 and Asn384 each carry an N-linked (GlcNAc...) asparagine glycan. Ser544 acts as the Charge relay system in catalysis. Asn636 carries an N-linked (GlcNAc...) asparagine glycan.

The protein belongs to the peptidase S8 family.

It is found in the secreted. This is Subtilisin-like protease SBT3.15 from Arabidopsis thaliana (Mouse-ear cress).